The chain runs to 207 residues: High frequency lysogenization protein HflD homolog (207 aa).

This sequence belongs to the HflD family.

Its subcellular location is the cytoplasm. It is found in the cell inner membrane. This Methylococcus capsulatus (strain ATCC 33009 / NCIMB 11132 / Bath) protein is High frequency lysogenization protein HflD homolog.